A 280-amino-acid polypeptide reads, in one-letter code: Vitamin B12-binding protein (280 aa).

An N-terminal signal peptide occupies residues Met1–Ala27. Positions Arg30–Ala277 constitute a Fe/B12 periplasmic-binding domain. Tyr57 contacts cyanocob(III)alamin. Cys190 and Cys266 are joined by a disulfide.

Belongs to the BtuF family. In terms of assembly, the complex is composed of two ATP-binding proteins (BtuD), two transmembrane proteins (BtuC) and a solute-binding protein (BtuF).

The protein localises to the periplasm. Its function is as follows. Part of the ABC transporter complex BtuCDF involved in vitamin B12 import. Binds vitamin B12 and delivers it to the periplasmic surface of BtuC. This is Vitamin B12-binding protein from Yersinia pseudotuberculosis serotype O:3 (strain YPIII).